We begin with the raw amino-acid sequence, 287 residues long: Proline iminopeptidase (287 aa).

The AB hydrolase-1 domain occupies P22 to E271. The Nucleophile role is filled by S98. D238 is an active-site residue. Catalysis depends on H265, which acts as the Proton donor.

Belongs to the peptidase S33 family.

It is found in the cell envelope. The catalysed reaction is Release of N-terminal proline from a peptide.. In terms of biological role, releases the N-terminal proline from various substrates. The sequence is that of Proline iminopeptidase from Lactiplantibacillus plantarum (strain ATCC BAA-793 / NCIMB 8826 / WCFS1) (Lactobacillus plantarum).